Reading from the N-terminus, the 321-residue chain is Probable arabinan endo-1,5-alpha-L-arabinosidase C (321 aa).

Residues 1–18 form the signal peptide; sequence MYLYTLILLFLASANVNA. D33 functions as the Proton acceptor in the catalytic mechanism. N192 is a glycosylation site (N-linked (GlcNAc...) asparagine). Residue E200 is the Proton donor of the active site. N-linked (GlcNAc...) asparagine glycosylation occurs at N224.

Belongs to the glycosyl hydrolase 43 family.

The protein resides in the secreted. It carries out the reaction Endohydrolysis of (1-&gt;5)-alpha-arabinofuranosidic linkages in (1-&gt;5)-arabinans.. It functions in the pathway glycan metabolism; L-arabinan degradation. Functionally, endo-1,5-alpha-L-arabinanase involved in degradation of pectin. Its preferred substrate is linear 1,5-alpha-L-arabinan. In Aspergillus fumigatus (strain ATCC MYA-4609 / CBS 101355 / FGSC A1100 / Af293) (Neosartorya fumigata), this protein is Probable arabinan endo-1,5-alpha-L-arabinosidase C (abnC).